The following is a 729-amino-acid chain: Pentatricopeptide repeat-containing protein At5g01110 (729 aa).

The disordered stretch occupies residues 26–45; the sequence is TSSSPVFEPSSSSSSSSSSA. Over residues 27-45 the composition is skewed to low complexity; the sequence is SSSPVFEPSSSSSSSSSSA. PPR repeat units lie at residues 112-147, 164-198, 199-233, 234-268, 269-303, 304-338, 339-373, 374-408, 409-443, 444-478, 479-513, 514-548, 549-583, 584-618, 619-649, 656-690, and 691-725; these read TSLSLSAMIHILVRSGRLSDAQSCLLRMIRRSGVSR, NDSVFDLLIRTYVQARKLREAHEAFTLLRSKGFTV, SIDACNALIGSLVRIGWVELAWGVYQEISRSGVGI, NVYTLNIMVNALCKDGKMEKVGTFLSQVQEKGVYP, DIVTYNTLISAYSSKGLMEEAFELMNAMPGKGFSP, GVYTYNTVINGLCKHGKYERAKEVFAEMLRSGLSP, DSTTYRSLLMEACKKGDVVETEKVFSDMRSRDVVP, DLVCFSSMMSLFTRSGNLDKALMYFNSVKEAGLIP, DNVIYTILIQGYCRKGMISVAMNLRNEMLQQGCAM, DVVTYNTILHGLCKRKMLGEADKLFNEMTERALFP, DSYTLTILIDGHCKLGNLQNAMELFQKMKEKRIRL, DVVTYNTLLDGFGKVGDIDTAKEIWADMVSKEILP, TPISYSILVNALCSKGHLAEAFRVWDEMISKNIKP, TVMICNSMIKGYCRSGNASDGESFLEKMISEGFVP, DCISYNTLIYGFVREENMSKAFGLVKKMEEE, DVFTYNSILHGFCRQNQMKEAEVVLRKMIERGVNP, and DRSTYTCMINGFVSQDNLTEAFRIHDEMLQRGFSP.

Belongs to the PPR family. P subfamily.

The sequence is that of Pentatricopeptide repeat-containing protein At5g01110 from Arabidopsis thaliana (Mouse-ear cress).